Reading from the N-terminus, the 578-residue chain is ER degradation-enhancing alpha-mannosidase-like protein 2 (578 aa).

The first 21 residues, 1 to 21 (MPFRLLIPLGLLCALLPQHHG), serve as a signal peptide directing secretion. 4 N-linked (GlcNAc...) asparagine glycosylation sites follow: Asn-90, Asn-112, Asn-289, and Asn-450. The disordered stretch occupies residues 517 to 557 (KNTVSSGPWEPPARPGTLFSPENHDQARERKPAKQKVPLLS). Over residues 538–548 (ENHDQARERKP) the composition is skewed to basic and acidic residues.

Belongs to the glycosyl hydrolase 47 family. N-glycosylated. In terms of tissue distribution, expressed ubiquitously in all tissues tested with slightly higher levels detected in small intestine and peripheral blood leukocytes and weakest levels in brain and skeletal muscle.

The protein localises to the endoplasmic reticulum lumen. In terms of biological role, involved in the endoplasmic reticulum-associated degradation (ERAD) pathway that targets misfolded glycoproteins for degradation in an N-glycan-dependent manner. May initiate ERAD by promoting the first mannose trimming step of ERAD substrates, from Man9GlcNAc2 to Man8GlcNAc2. Seems to recognize and bind to exposed hydrophobic regions in target proteins. This chain is ER degradation-enhancing alpha-mannosidase-like protein 2 (EDEM2), found in Homo sapiens (Human).